Consider the following 686-residue polypeptide: Chondroitin proteoglycan 1 (686 aa).

A signal peptide spans 1–18 (MLPKSVLIVAFLVASSSA). An N-linked (GlcNAc...) asparagine glycan is attached at Asn46. A Chitin-binding type-2 1 domain is found at 63 to 120 (DTDCSTKEDGLYAIGGCSPQFLTCSGGIARIMDCPANLIYDQRIIACEYSYNVPECSG). Cys96 and Cys109 are joined by a disulfide. The N-linked (GlcNAc...) asparagine glycan is linked to Asn143. The Chitin-binding type-2 2 domain maps to 228–285 (DKTCNGKADGFYSFGQCSDHYIACSNGYTIPMQCPARLSFDEARVICDYTMNVPECQN). A disulfide bridge connects residues Cys261 and Cys274. The tract at residues 284–312 (QNGSGNYEGSAEETTTEASGELPYSNGYG) is disordered. Asn285, Asn635, and Asn664 each carry an N-linked (GlcNAc...) asparagine glycan. The disordered stretch occupies residues 658–686 (KLRSATNRTSTKEATTRTQNMHAHYHRNH).

In terms of biological role, required for polar body extrusion during cytokinesis in embryo development. Affects cortical granule size. Shown to have roles in meiotic chromosome segregation, osmotic barrier function and polarization in conjunction with cpg-2. Binds chitin. The chain is Chondroitin proteoglycan 1 (cpg-1) from Caenorhabditis briggsae.